Here is a 212-residue protein sequence, read N- to C-terminus: Thiamine-phosphate synthase (212 aa).

4-amino-2-methyl-5-(diphosphooxymethyl)pyrimidine-binding positions include 43-47 (QYRNK) and Asn75. Residues Asp76 and Asp95 each coordinate Mg(2+). Residue Ser114 participates in 4-amino-2-methyl-5-(diphosphooxymethyl)pyrimidine binding. 2-[(2R,5Z)-2-carboxy-4-methylthiazol-5(2H)-ylidene]ethyl phosphate is bound at residue 141 to 143 (SMT). Residue Lys144 coordinates 4-amino-2-methyl-5-(diphosphooxymethyl)pyrimidine. 2-[(2R,5Z)-2-carboxy-4-methylthiazol-5(2H)-ylidene]ethyl phosphate is bound at residue Gly171.

Belongs to the thiamine-phosphate synthase family. Mg(2+) is required as a cofactor.

It carries out the reaction 2-[(2R,5Z)-2-carboxy-4-methylthiazol-5(2H)-ylidene]ethyl phosphate + 4-amino-2-methyl-5-(diphosphooxymethyl)pyrimidine + 2 H(+) = thiamine phosphate + CO2 + diphosphate. The catalysed reaction is 2-(2-carboxy-4-methylthiazol-5-yl)ethyl phosphate + 4-amino-2-methyl-5-(diphosphooxymethyl)pyrimidine + 2 H(+) = thiamine phosphate + CO2 + diphosphate. The enzyme catalyses 4-methyl-5-(2-phosphooxyethyl)-thiazole + 4-amino-2-methyl-5-(diphosphooxymethyl)pyrimidine + H(+) = thiamine phosphate + diphosphate. It functions in the pathway cofactor biosynthesis; thiamine diphosphate biosynthesis; thiamine phosphate from 4-amino-2-methyl-5-diphosphomethylpyrimidine and 4-methyl-5-(2-phosphoethyl)-thiazole: step 1/1. Condenses 4-methyl-5-(beta-hydroxyethyl)thiazole monophosphate (THZ-P) and 2-methyl-4-amino-5-hydroxymethyl pyrimidine pyrophosphate (HMP-PP) to form thiamine monophosphate (TMP). This chain is Thiamine-phosphate synthase, found in Nitrosomonas eutropha (strain DSM 101675 / C91 / Nm57).